Here is a 426-residue protein sequence, read N- to C-terminus: Histidine--tRNA ligase (426 aa).

This sequence belongs to the class-II aminoacyl-tRNA synthetase family. As to quaternary structure, homodimer.

It localises to the cytoplasm. It catalyses the reaction tRNA(His) + L-histidine + ATP = L-histidyl-tRNA(His) + AMP + diphosphate + H(+). The polypeptide is Histidine--tRNA ligase (Legionella pneumophila (strain Paris)).